A 1117-amino-acid chain; its full sequence is Telomerase reverse transcriptase (1117 aa).

The tract at residues 1-191 is TEN; that stretch reads MQKINNINNN…VKQKKWYKNN (191 aa). The segment at 217-519 is RBD; the sequence is NQYIYPEIQR…ENLEKVEEKL (303 aa). The Reverse transcriptase domain occupies 517–881; sequence EKLIPEDSFQ…NECQWIGKSI (365 aa). The segment at 520–887 is RT; that stretch reads IPEDSFQKYP…GKSIDMNTLE (368 aa). Asp618 contributes to the Mg(2+) binding site. The segment at 638 to 742 is TRAP; that stretch reads SDLIQDTYFI…NQDKPRCITK (105 aa). The Mg(2+) site is built by Asp815 and Asp816. The CTE stretch occupies residues 888 to 1117; that stretch reads IKSIQKQTQQ…SAKSNQQNTN (230 aa).

This sequence belongs to the reverse transcriptase family. Telomerase subfamily. As to quaternary structure, component of the telomerase holoenzyme complex, composed of the catalytic core (the catalytic subunit TERT, the telomerase RNA template component TER and TAP65/p65), which is associated with two heterotrimeric subcomplexes: (i) the replication protein A (RPA)-related subcomplex, composed of TEB1, RPA2/TEB2 and RPA3/TEB3 and (ii) the CST-like subcomplex, composed of TAP75/p75, TAP45/p45 and TAP19/p19. TEB1 and the CST-like subcomplex are tethered to the catalytic core by TAP50/p50.

It localises to the nucleus. The protein resides in the chromosome. Its subcellular location is the telomere. It catalyses the reaction DNA(n) + a 2'-deoxyribonucleoside 5'-triphosphate = DNA(n+1) + diphosphate. Functionally, catalytic component of telomerase, an essential ribonucleoprotein enzyme that copies new telomeric repeats onto chromosome ends by repetitively synthesizing the short telomere-repeat sequence 5'-TTGGGG-3' using an RNA template component TER. TERT is a reverse transcriptase that adds simple sequence repeats to chromosome ends by copying a template sequence within the RNA component of the enzyme. This chain is Telomerase reverse transcriptase, found in Tetrahymena thermophila (strain SB210).